Here is a 360-residue protein sequence, read N- to C-terminus: Phenylalanine--tRNA ligase alpha subunit (360 aa).

E260 is a binding site for Mg(2+).

Belongs to the class-II aminoacyl-tRNA synthetase family. Phe-tRNA synthetase alpha subunit type 1 subfamily. Tetramer of two alpha and two beta subunits. Mg(2+) is required as a cofactor.

Its subcellular location is the cytoplasm. The enzyme catalyses tRNA(Phe) + L-phenylalanine + ATP = L-phenylalanyl-tRNA(Phe) + AMP + diphosphate + H(+). This Paracoccus denitrificans (strain Pd 1222) protein is Phenylalanine--tRNA ligase alpha subunit.